Reading from the N-terminus, the 314-residue chain is UDP-N-acetylenolpyruvoylglucosamine reductase (314 aa).

Positions 25–191 (KIGGPADLFA…VRVGMELRWG (167 aa)) constitute an FAD-binding PCMH-type domain. The active site involves Arg170. Catalysis depends on Ser220, which acts as the Proton donor. Residue Glu291 is part of the active site.

This sequence belongs to the MurB family. It depends on FAD as a cofactor.

It is found in the cytoplasm. It carries out the reaction UDP-N-acetyl-alpha-D-muramate + NADP(+) = UDP-N-acetyl-3-O-(1-carboxyvinyl)-alpha-D-glucosamine + NADPH + H(+). It participates in cell wall biogenesis; peptidoglycan biosynthesis. Cell wall formation. The sequence is that of UDP-N-acetylenolpyruvoylglucosamine reductase from Heliobacterium modesticaldum (strain ATCC 51547 / Ice1).